Reading from the N-terminus, the 625-residue chain is 1-deoxy-D-xylulose-5-phosphate synthase (625 aa).

Thiamine diphosphate contacts are provided by residues histidine 80 and 121–123; that span reads GHS. Aspartate 152 contributes to the Mg(2+) binding site. Thiamine diphosphate contacts are provided by residues 153–154, asparagine 181, tyrosine 290, and glutamate 371; that span reads GA. Asparagine 181 is a Mg(2+) binding site.

Belongs to the transketolase family. DXPS subfamily. Homodimer. Mg(2+) serves as cofactor. Thiamine diphosphate is required as a cofactor.

It carries out the reaction D-glyceraldehyde 3-phosphate + pyruvate + H(+) = 1-deoxy-D-xylulose 5-phosphate + CO2. It participates in metabolic intermediate biosynthesis; 1-deoxy-D-xylulose 5-phosphate biosynthesis; 1-deoxy-D-xylulose 5-phosphate from D-glyceraldehyde 3-phosphate and pyruvate: step 1/1. Its function is as follows. Catalyzes the acyloin condensation reaction between C atoms 2 and 3 of pyruvate and glyceraldehyde 3-phosphate to yield 1-deoxy-D-xylulose-5-phosphate (DXP). The sequence is that of 1-deoxy-D-xylulose-5-phosphate synthase from Haemophilus influenzae (strain ATCC 51907 / DSM 11121 / KW20 / Rd).